A 67-amino-acid polypeptide reads, in one-letter code: Putative cytosolic sulfotransferase 2 (67 aa).

Residue 31-33 (RDG) participates in 3'-phosphoadenylyl sulfate binding.

The protein belongs to the sulfotransferase 1 family.

It is found in the cytoplasm. Its function is as follows. Sulfotransferase that utilizes 3'-phospho-5'-adenylyl sulfate (PAPS) as sulfonate donor. This is Putative cytosolic sulfotransferase 2 (SOT2) from Arabidopsis thaliana (Mouse-ear cress).